A 559-amino-acid polypeptide reads, in one-letter code: MENQKVPISSVPNLKELSRPIANFPPSIWGDRFINYTCEDENEQAQKERQVEELKEQVRRELAATVDKPLQQLNIIDATQRLGIAYHFENEIEESLEHIYLHTYVKNNCFQGSHDLYSVALWFRLLRQDGYKVSCDVFDNFRDYEGNFKNSLMEDAKGLLELYEATHLSVHGEEMLDDALEFAKTRLESIVNHLNYPLAEQVRHALYRPLRKGLPRLEAVYFFRIYEAYHSHNKALLKLAKLDFNLLQSLHRKELGDMARWWRSLDFATKFPFARDRLVEGYFWILGVYFEPQYSLAREITTKVFAMISTIDDIYDAYGTLDELKLFTEAIQRWDVGSLDQLPEYMKPCYKSILDVYNEIEEEMANQGSLFRMHYAKEVMKTIVEGYMDEAKWCHEKYVPTFQEYMSLALVTSGYTFLTTISYLGMGGIASKEAFEWLFSHPPIIEASESICRLMDDMSSHKFEQERGHVASGIECYMKQYGVIEEEAHDEFHKRLVKAWKDINEGFLRPYAVPEPLLMRILNLTRVMDVIYKNEDSYTHVKKAMKDNIASLLIDPMIV.

Residues Asp-312, Asp-316, and Glu-464 each coordinate Mg(2+). The DDXXD motif signature appears at 312–316 (DDIYD).

The protein belongs to the terpene synthase family. Tpsa subfamily. Mg(2+) serves as cofactor. The cofactor is Mn(2+).

Catalyzes alpha-humulene and delta-cadinene, as well as beta-elemene, the thermal rearrangement product of germacrene A and several other bicyclic sesquiterpenes when incubated with (2E,6E)-farnesyl diphosphate. The protein is Sesquiterpene synthase of Santalum austrocaledonicum (Sandalwood).